The sequence spans 28 residues: Cruzioseptin-10 (28 aa).

Expressed by the skin glands.

The protein localises to the secreted. Has antimicrobial activity. The chain is Cruzioseptin-10 from Cruziohyla calcarifer (Splendid leaf frog).